The following is a 405-amino-acid chain: Acetate kinase (405 aa).

Asn-7 contacts Mg(2+). ATP is bound at residue Lys-14. A substrate-binding site is contributed by Arg-91. The active-site Proton donor/acceptor is Asp-148. ATP is bound by residues 208 to 212 (HLGNG) and 283 to 285 (DFR). Residue Glu-384 coordinates Mg(2+).

The protein belongs to the acetokinase family. Homodimer. The cofactor is Mg(2+). It depends on Mn(2+) as a cofactor.

The protein localises to the cytoplasm. It catalyses the reaction acetate + ATP = acetyl phosphate + ADP. It functions in the pathway metabolic intermediate biosynthesis; acetyl-CoA biosynthesis; acetyl-CoA from acetate: step 1/2. Its function is as follows. Catalyzes the formation of acetyl phosphate from acetate and ATP. Can also catalyze the reverse reaction. The chain is Acetate kinase from Dictyoglomus turgidum (strain DSM 6724 / Z-1310).